Consider the following 352-residue polypeptide: N-acetyl-gamma-glutamyl-phosphate reductase (352 aa).

Residue Cys-149 is part of the active site.

It belongs to the NAGSA dehydrogenase family. Type 1 subfamily.

Its subcellular location is the cytoplasm. The enzyme catalyses N-acetyl-L-glutamate 5-semialdehyde + phosphate + NADP(+) = N-acetyl-L-glutamyl 5-phosphate + NADPH + H(+). It participates in amino-acid biosynthesis; L-arginine biosynthesis; N(2)-acetyl-L-ornithine from L-glutamate: step 3/4. Functionally, catalyzes the NADPH-dependent reduction of N-acetyl-5-glutamyl phosphate to yield N-acetyl-L-glutamate 5-semialdehyde. The polypeptide is N-acetyl-gamma-glutamyl-phosphate reductase (Polynucleobacter asymbioticus (strain DSM 18221 / CIP 109841 / QLW-P1DMWA-1) (Polynucleobacter necessarius subsp. asymbioticus)).